The sequence spans 514 residues: HTH-type transcriptional regulatory protein TyrR (514 aa).

Positions 2 to 72 (RLEVFCEDRL…GVTDVRTVPW (71 aa)) constitute an ACT domain. The PAS domain maps to 78–120 (EHLALSALLEALPEPVLSLDMKSKIEMANPASCQLFAHTQDRM). In terms of domain architecture, Sigma-54 factor interaction spans 206-428 (IIAVSAKMKH…VKNAIYRALT (223 aa)). ATP-binding positions include 234 to 241 (GNTGTGKD) and 290 to 299 (ANGGSVLLDE). Positions 482-502 (STRKLAKRLGVSHTAIANKLR) form a DNA-binding region, H-T-H motif.

Homodimer. In presence of tyrosine (or high concentrations of phenylalanine or tryptophan) and ATP, it self-associates to form an hexamer.

The protein resides in the cytoplasm. Dual transcriptional regulator of the TyrR regulon, which includes a number of genes coding for proteins involved in the biosynthesis or transport of the three aromatic amino acids, phenylalanine, tyrosine and tryptophan. These three aromatic amino acids act as effectors which bind to the TyrR protein to form an active regulatory protein. Acts by binding specifically to TyrR boxes in the promoter region of the target genes. This Citrobacter braakii protein is HTH-type transcriptional regulatory protein TyrR.